Reading from the N-terminus, the 393-residue chain is S-adenosylmethionine synthase 4 (393 aa).

Glutamate 9 lines the Mg(2+) pocket. Histidine 15 is a binding site for ATP. Position 43 (glutamate 43) interacts with K(+). Positions 56 and 99 each coordinate L-methionine. ATP is bound by residues 167 to 169 (DGK), 235 to 238 (SGRF), aspartate 246, 252 to 253 (RK), alanine 269, lysine 273, and lysine 277. Aspartate 246 contacts L-methionine. Position 277 (lysine 277) interacts with L-methionine.

It belongs to the AdoMet synthase family. As to quaternary structure, homotetramer. The cofactor is Mn(2+). It depends on Mg(2+) as a cofactor. Requires Co(2+) as cofactor. K(+) serves as cofactor. As to expression, detected in trichomes (at the protein level).

It localises to the cytoplasm. The catalysed reaction is L-methionine + ATP + H2O = S-adenosyl-L-methionine + phosphate + diphosphate. It functions in the pathway amino-acid biosynthesis; S-adenosyl-L-methionine biosynthesis; S-adenosyl-L-methionine from L-methionine: step 1/1. Its function is as follows. Catalyzes the formation of S-adenosylmethionine from methionine and ATP. The reaction comprises two steps that are both catalyzed by the same enzyme: formation of S-adenosylmethionine (AdoMet) and triphosphate, and subsequent hydrolysis of the triphosphate. The chain is S-adenosylmethionine synthase 4 (METK4) from Arabidopsis thaliana (Mouse-ear cress).